Consider the following 398-residue polypeptide: Succinate--CoA ligase [ADP-forming] subunit beta (398 aa).

An ATP-grasp domain is found at 9 to 254 (KAVLREFGVS…ETEEDAKEIE (246 aa)). ATP contacts are provided by residues lysine 46, 53-55 (GRG), glutamate 109, alanine 112, and glutamate 117. 2 residues coordinate Mg(2+): asparagine 209 and aspartate 223. Substrate-binding positions include asparagine 274 and 331–333 (GIM).

This sequence belongs to the succinate/malate CoA ligase beta subunit family. In terms of assembly, heterotetramer of two alpha and two beta subunits. It depends on Mg(2+) as a cofactor.

It carries out the reaction succinate + ATP + CoA = succinyl-CoA + ADP + phosphate. The enzyme catalyses GTP + succinate + CoA = succinyl-CoA + GDP + phosphate. The protein operates within carbohydrate metabolism; tricarboxylic acid cycle; succinate from succinyl-CoA (ligase route): step 1/1. Succinyl-CoA synthetase functions in the citric acid cycle (TCA), coupling the hydrolysis of succinyl-CoA to the synthesis of either ATP or GTP and thus represents the only step of substrate-level phosphorylation in the TCA. The beta subunit provides nucleotide specificity of the enzyme and binds the substrate succinate, while the binding sites for coenzyme A and phosphate are found in the alpha subunit. The protein is Succinate--CoA ligase [ADP-forming] subunit beta of Afipia carboxidovorans (strain ATCC 49405 / DSM 1227 / KCTC 32145 / OM5) (Oligotropha carboxidovorans).